Consider the following 390-residue polypeptide: METFLFTSESVNEGHPDKLCDQVSDAILDACLEQDPESKVACETCTKTNMVMVFGEITTKATVDYEKIVRDTCRGIGFTSADVGLDADNCKVLVNIEQQSPDIAQGVHGHLTKKPEEIGAGDQGHMFGYATDETPELMPLTHVWATKLGAKLTEVRKNKTCPWLRPDGKTQVTVEYKNDNGAMVPIRVHTVLISTQHDETVTNDQIAQDLKEHVIKPVIPSQYLDENTIFHLNPSGRFVIGGPHGDAGLTGRKIIIDTYGGWGAHGGGAFSGKDPTKVDRSGAYIVRQAAKSVVASGLARRCIVQVSYAIGVAEPLSVFVDTYKTGTIPDKDILTLIKENFDFRPGMMSINLDLLRGGNFRYQKTAAYGHFGRDDPDFSWETVKVLKPKA.

E9 provides a ligand contact to Mg(2+). H15 serves as a coordination point for ATP. A K(+)-binding site is contributed by E43. Residues E56 and Q99 each contribute to the L-methionine site. ATP-binding positions include 167 to 169 (DGK), 235 to 238 (SGRF), D246, 252 to 253 (RK), A269, K273, and K277. Residue D246 coordinates L-methionine. K277 lines the L-methionine pocket.

This sequence belongs to the AdoMet synthase family. In terms of assembly, homotetramer. It depends on Mn(2+) as a cofactor. Mg(2+) serves as cofactor. Requires Co(2+) as cofactor. K(+) is required as a cofactor.

It localises to the cytoplasm. The enzyme catalyses L-methionine + ATP + H2O = S-adenosyl-L-methionine + phosphate + diphosphate. It functions in the pathway amino-acid biosynthesis; S-adenosyl-L-methionine biosynthesis; S-adenosyl-L-methionine from L-methionine: step 1/1. In terms of biological role, catalyzes the formation of S-adenosylmethionine from methionine and ATP. The reaction comprises two steps that are both catalyzed by the same enzyme: formation of S-adenosylmethionine (AdoMet) and triphosphate, and subsequent hydrolysis of the triphosphate. The sequence is that of S-adenosylmethionine synthase 1 (SAMS1) from Nicotiana tabacum (Common tobacco).